Here is a 178-residue protein sequence, read N- to C-terminus: GTP-dependent dephospho-CoA kinase (178 aa).

Residues D48, I49, D67, K69, and E126 each contribute to the GTP site.

Belongs to the GTP-dependent DPCK family.

The catalysed reaction is 3'-dephospho-CoA + GTP = GDP + CoA + H(+). It participates in cofactor biosynthesis; coenzyme A biosynthesis. Its function is as follows. Catalyzes the GTP-dependent phosphorylation of the 3'-hydroxyl group of dephosphocoenzyme A to form coenzyme A (CoA). The polypeptide is GTP-dependent dephospho-CoA kinase (Methanothrix thermoacetophila (strain DSM 6194 / JCM 14653 / NBRC 101360 / PT) (Methanosaeta thermophila)).